A 127-amino-acid polypeptide reads, in one-letter code: Flagellar assembly factor FliW (127 aa).

It belongs to the FliW family. As to quaternary structure, interacts with translational regulator CsrA and flagellin(s).

Its subcellular location is the cytoplasm. Its function is as follows. Acts as an anti-CsrA protein, binds CsrA and prevents it from repressing translation of its target genes, one of which is flagellin. Binds to flagellin and participates in the assembly of the flagellum. The polypeptide is Flagellar assembly factor FliW (Campylobacter concisus (strain 13826)).